The chain runs to 79 residues: Tungsten-containing formylmethanofuran dehydrogenase 2 subunit G (79 aa).

4Fe-4S ferredoxin-type domains are found at residues valine 2–valine 31 and threonine 51–threonine 79. Cysteine 11, cysteine 14, cysteine 17, cysteine 21, cysteine 60, cysteine 63, cysteine 66, and cysteine 70 together coordinate [4Fe-4S] cluster.

The cofactor is [4Fe-4S] cluster.

The enzyme catalyses N-formylmethanofuran + 2 oxidized [2Fe-2S]-[ferredoxin] + H2O = methanofuran + 2 reduced [2Fe-2S]-[ferredoxin] + CO2 + H(+). It participates in one-carbon metabolism; methanogenesis from CO(2); 5,10-methenyl-5,6,7,8-tetrahydromethanopterin from CO(2): step 1/3. Its activity is regulated as follows. Not inactivated by cyanide. Functionally, catalyzes the reversible oxidation of CO(2) and methanofuran (MFR) to N-formylmethanofuran (CHO-MFR). This enzyme is oxygen-labile. May function as an electron transfer protein. This Methanopyrus kandleri (strain AV19 / DSM 6324 / JCM 9639 / NBRC 100938) protein is Tungsten-containing formylmethanofuran dehydrogenase 2 subunit G (fwdG).